The sequence spans 74 residues: uncharacterized protein (74 aa).

A coiled-coil region spans residues 25 to 62; sequence QQTIDRLAGLELRMKQLIRAIEVNNELLRTMQEQQNRV.

This is an uncharacterized protein from Bacillus subtilis (strain 168).